A 246-amino-acid polypeptide reads, in one-letter code: Small ribosomal subunit protein uS2 (246 aa).

Positions 224–246 (AKQGEEEAEAAEETAPETETTTA) are disordered. A compositionally biased stretch (acidic residues) spans 229–239 (EEAEAAEETAP).

It belongs to the universal ribosomal protein uS2 family.

The protein is Small ribosomal subunit protein uS2 of Bacillus velezensis (strain DSM 23117 / BGSC 10A6 / LMG 26770 / FZB42) (Bacillus amyloliquefaciens subsp. plantarum).